A 400-amino-acid polypeptide reads, in one-letter code: Cartilage-associated protein (400 aa).

The N-terminal stretch at 1–25 (MGPRSPTAALLVLLCVGCAPTPGRG) is a signal peptide. Asn-86 and Asn-362 each carry an N-linked (GlcNAc...) asparagine glycan.

The protein belongs to the leprecan family. Found in articular chondrocytes. Expressed in a variety of tissues.

The protein resides in the secreted. The protein localises to the extracellular space. It localises to the extracellular matrix. In terms of biological role, necessary for efficient 3-hydroxylation of fibrillar collagen prolyl residues. In Mus musculus (Mouse), this protein is Cartilage-associated protein (Crtap).